The chain runs to 100 residues: Large ribosomal subunit protein uL23 (100 aa).

Belongs to the universal ribosomal protein uL23 family. Part of the 50S ribosomal subunit. Contacts protein L29, and trigger factor when it is bound to the ribosome.

Its function is as follows. One of the early assembly proteins it binds 23S rRNA. One of the proteins that surrounds the polypeptide exit tunnel on the outside of the ribosome. Forms the main docking site for trigger factor binding to the ribosome. The sequence is that of Large ribosomal subunit protein uL23 from Buchnera aphidicola subsp. Acyrthosiphon pisum (strain 5A).